We begin with the raw amino-acid sequence, 564 residues long: Serine/threonine-protein kinase PknA (564 aa).

The region spanning 9–271 (YRVIKTLGSG…TAREMLEALQ (263 aa)) is the Protein kinase domain. ATP is bound by residues 15–23 (LGSGGFGET) and lysine 40. The active-site Proton acceptor is aspartate 139. Residues 360 to 406 (QPVTQTTSLPSETTISNNDTPTVEPSPTDTPETPISQTVTQDPTPQA) are compositionally biased toward polar residues. Residues 360 to 458 (QPVTQTTSLP…PVEATDRPSP (99 aa)) are disordered. Over residues 428–445 (TTEPTTSVPQPTTPSEPQ) the composition is skewed to low complexity.

It belongs to the protein kinase superfamily. Ser/Thr protein kinase family.

The catalysed reaction is L-seryl-[protein] + ATP = O-phospho-L-seryl-[protein] + ADP + H(+). It carries out the reaction L-threonyl-[protein] + ATP = O-phospho-L-threonyl-[protein] + ADP + H(+). In terms of biological role, probably required for both normal cellular growth and differentiation. Inactivation of pknA leads to colonies that appear light green and rough in the absence of combined nitrogen. The chain is Serine/threonine-protein kinase PknA (pknA) from Nostoc sp. (strain PCC 7120 / SAG 25.82 / UTEX 2576).